Reading from the N-terminus, the 422-residue chain is Phosphoribosylamine--glycine ligase (422 aa).

Positions 107–314 constitute an ATP-grasp domain; it reads KAFMQRHGIP…LFDVLDRAID (208 aa). Position 133–194 (133–194) interacts with ATP; it reads VDREGAPIVI…EEFLAGEEAS (62 aa). The Mg(2+) site is built by Glu284 and Asn286.

It belongs to the GARS family. The cofactor is Mg(2+). Requires Mn(2+) as cofactor.

It carries out the reaction 5-phospho-beta-D-ribosylamine + glycine + ATP = N(1)-(5-phospho-beta-D-ribosyl)glycinamide + ADP + phosphate + H(+). Its pathway is purine metabolism; IMP biosynthesis via de novo pathway; N(1)-(5-phospho-D-ribosyl)glycinamide from 5-phospho-alpha-D-ribose 1-diphosphate: step 2/2. In Ralstonia nicotianae (strain ATCC BAA-1114 / GMI1000) (Ralstonia solanacearum), this protein is Phosphoribosylamine--glycine ligase.